The chain runs to 447 residues: Tubulin beta-1 chain (447 aa).

GTP-binding residues include Q11, E69, S138, G142, T143, G144, N204, and N226. E69 contacts Mg(2+).

This sequence belongs to the tubulin family. Dimer of alpha and beta chains. A typical microtubule is a hollow water-filled tube with an outer diameter of 25 nm and an inner diameter of 15 nM. Alpha-beta heterodimers associate head-to-tail to form protofilaments running lengthwise along the microtubule wall with the beta-tubulin subunit facing the microtubule plus end conferring a structural polarity. Microtubules usually have 13 protofilaments but different protofilament numbers can be found in some organisms and specialized cells. It depends on Mg(2+) as a cofactor.

Its subcellular location is the cytoplasm. It is found in the cytoskeleton. Functionally, tubulin is the major constituent of microtubules, a cylinder consisting of laterally associated linear protofilaments composed of alpha- and beta-tubulin heterodimers. Microtubules grow by the addition of GTP-tubulin dimers to the microtubule end, where a stabilizing cap forms. Below the cap, tubulin dimers are in GDP-bound state, owing to GTPase activity of alpha-tubulin. In Emericella nidulans (strain FGSC A4 / ATCC 38163 / CBS 112.46 / NRRL 194 / M139) (Aspergillus nidulans), this protein is Tubulin beta-1 chain (benA).